The chain runs to 376 residues: Protein-glutamate methylesterase/protein-glutamine glutaminase 1 (376 aa).

The Response regulatory domain maps to 4–121; it reads KVLVVDDSSF…ARNRDEAVSL (118 aa). Asp-55 carries the post-translational modification 4-aspartylphosphate. The interval 138 to 169 is disordered; that stretch reads RPVASSTPVQERPQSTLNRPTTGLRREASAQA. Residues 141–158 show a composition bias toward polar residues; that stretch reads ASSTPVQERPQSTLNRPT. Positions 183–376 constitute a CheB-type methylesterase domain; the sequence is SGKKYQLTAI…ERMLVEVGLA (194 aa). Catalysis depends on residues Ser-195, His-222, and Asp-318.

It belongs to the CheB family. Phosphorylated by CheA. Phosphorylation of the N-terminal regulatory domain activates the methylesterase activity.

It is found in the cytoplasm. The catalysed reaction is [protein]-L-glutamate 5-O-methyl ester + H2O = L-glutamyl-[protein] + methanol + H(+). It catalyses the reaction L-glutaminyl-[protein] + H2O = L-glutamyl-[protein] + NH4(+). Functionally, involved in chemotaxis. Part of a chemotaxis signal transduction system that modulates chemotaxis in response to various stimuli. Catalyzes the demethylation of specific methylglutamate residues introduced into the chemoreceptors (methyl-accepting chemotaxis proteins or MCP) by CheR. Also mediates the irreversible deamidation of specific glutamine residues to glutamic acid. This is Protein-glutamate methylesterase/protein-glutamine glutaminase 1 from Vibrio vulnificus (strain YJ016).